We begin with the raw amino-acid sequence, 289 residues long: Protease HtpX homolog (289 aa).

A run of 2 helical transmembrane segments spans residues 10-30 and 34-54; these read TAAL…VIGS and STTP…YGYW. His138 provides a ligand contact to Zn(2+). Glu139 is a catalytic residue. His142 serves as a coordination point for Zn(2+). The next 2 membrane-spanning stretches (helical) occupy residues 153 to 173 and 182 to 202; these read VAAA…IFGG and LAVM…QSAI. Glu207 contacts Zn(2+).

Belongs to the peptidase M48B family. Zn(2+) serves as cofactor.

The protein localises to the cell membrane. The chain is Protease HtpX homolog from Arthrobacter sp. (strain FB24).